The chain runs to 62 residues: Large ribosomal subunit protein bL32 (62 aa).

The span at 1–16 (MAVQKNRKTRSKRGMR) shows a compositional bias: basic residues. The interval 1–62 (MAVQKNRKTR…VISQGDSDDE (62 aa)) is disordered. Residues 53 to 62 (VISQGDSDDE) show a composition bias toward polar residues.

This sequence belongs to the bacterial ribosomal protein bL32 family.

The protein is Large ribosomal subunit protein bL32 of Alcanivorax borkumensis (strain ATCC 700651 / DSM 11573 / NCIMB 13689 / SK2).